Reading from the N-terminus, the 373-residue chain is Dual-specificity RNA methyltransferase RlmN (373 aa).

Residue E94 is the Proton acceptor of the active site. Residues 100–339 form the Radical SAM core domain; it reads EDDRATLCVS…VIVRKTRGDD (240 aa). An intrachain disulfide couples C107 to C344. [4Fe-4S] cluster contacts are provided by C114, C118, and C121. Residues 168–169, S200, 222–224, and N301 contribute to the S-adenosyl-L-methionine site; these read GE and SIH. C344 serves as the catalytic S-methylcysteine intermediate.

The protein belongs to the radical SAM superfamily. RlmN family. [4Fe-4S] cluster serves as cofactor.

Its subcellular location is the cytoplasm. It carries out the reaction adenosine(2503) in 23S rRNA + 2 reduced [2Fe-2S]-[ferredoxin] + 2 S-adenosyl-L-methionine = 2-methyladenosine(2503) in 23S rRNA + 5'-deoxyadenosine + L-methionine + 2 oxidized [2Fe-2S]-[ferredoxin] + S-adenosyl-L-homocysteine. The catalysed reaction is adenosine(37) in tRNA + 2 reduced [2Fe-2S]-[ferredoxin] + 2 S-adenosyl-L-methionine = 2-methyladenosine(37) in tRNA + 5'-deoxyadenosine + L-methionine + 2 oxidized [2Fe-2S]-[ferredoxin] + S-adenosyl-L-homocysteine. Its function is as follows. Specifically methylates position 2 of adenine 2503 in 23S rRNA and position 2 of adenine 37 in tRNAs. m2A2503 modification seems to play a crucial role in the proofreading step occurring at the peptidyl transferase center and thus would serve to optimize ribosomal fidelity. This Shewanella baltica (strain OS155 / ATCC BAA-1091) protein is Dual-specificity RNA methyltransferase RlmN.